The sequence spans 479 residues: MSLKTAPVIVWFRKDLRLSDNLALLAAVEHGGPVIPVYIREKSAGPLGGAQEWWLHHSLAALSSSLEKAGGRLVLASGDAERILRDLISETGADTVVWNRRYDPTGMATDKALKQKLRDDGLTVRSFSGQLLHEPSRLQTKSGGPYRVYTPFWRALEGSDEPHAPADPPKSLTAPKVWPKSEKLSNWKLLPTKPDWAKDFSDIWTPGETGALDKLDDFIDGALKGYEEGRDFPAKPATSLLSPHLAAGEISPAAVWHATKGLSRHIASNDISRFRKEIVWREFCYHLLFHFPELGEKNWNDSFDAFSWRDDEKSFKAWTRGMTGYPIVDAGMRQLWQHGTMHNRVRMIVASFLIKHLLIDWRKGEKWFRDTLVDADPASNAANWQWVAGSGADASPFFRIFNPILQGEKFDGDGDYVRRFVPELEKLERKYIHKPFEAPKDALKKAGVELGKTYPLPIVDHGKARERALAAYAAVKKTT.

The Photolyase/cryptochrome alpha/beta domain maps to alanine 6–leucine 132. Tyrosine 226 provides a ligand contact to FAD. Position 230 (arginine 230) interacts with DNA. FAD is bound by residues threonine 238–serine 242 and glutamate 277–cysteine 284. 2 interaction with DNA regions span residues glutamate 277–cysteine 284 and asparagine 343–arginine 344. Aspartate 374–aspartate 376 contributes to the FAD binding site. A DNA-binding site is contributed by glutamine 406.

This sequence belongs to the DNA photolyase class-3 family. It depends on FAD as a cofactor. The cofactor is (6R)-5,10-methylene-5,6,7,8-tetrahydrofolate.

It catalyses the reaction cyclobutadipyrimidine (in DNA) = 2 pyrimidine residues (in DNA).. Functionally, photolyase involved in the repair of UV radiation-induced DNA damage. By using blue-light energy, catalyzes the photoreactivation of cyclobutane pyrimidine dimers (CPDs), which are formed between adjacent bases on the same DNA strand upon exposure to ultraviolet radiation. Can repair CPD lesions in ssDNA as well as in dsDNA. This chain is Deoxyribodipyrimidine photo-lyase, found in Agrobacterium fabrum (strain C58 / ATCC 33970) (Agrobacterium tumefaciens (strain C58)).